The following is a 236-amino-acid chain: 2,3,4,5-tetrahydropyridine-2,6-dicarboxylate N-acetyltransferase (236 aa).

The protein belongs to the transferase hexapeptide repeat family. DapH subfamily.

The enzyme catalyses (S)-2,3,4,5-tetrahydrodipicolinate + acetyl-CoA + H2O = L-2-acetamido-6-oxoheptanedioate + CoA. The protein operates within amino-acid biosynthesis; L-lysine biosynthesis via DAP pathway; LL-2,6-diaminopimelate from (S)-tetrahydrodipicolinate (acetylase route): step 1/3. Catalyzes the transfer of an acetyl group from acetyl-CoA to tetrahydrodipicolinate. In Geobacillus thermodenitrificans (strain NG80-2), this protein is 2,3,4,5-tetrahydropyridine-2,6-dicarboxylate N-acetyltransferase.